The primary structure comprises 1116 residues: Cation channel sperm-associated auxiliary subunit beta (1116 aa).

Topologically, residues 1–1053 (MESPLIYVSV…QIYVDEAPLP (1053 aa)) are extracellular. Cysteine 35 and cysteine 60 form a disulfide bridge. Residues asparagine 90, asparagine 100, asparagine 118, asparagine 226, and asparagine 321 are each glycosylated (N-linked (GlcNAc...) asparagine). Cysteines 189 and 302 form a disulfide. Cysteine 330 and cysteine 343 are disulfide-bonded. Residues asparagine 618 and asparagine 690 are each glycosylated (N-linked (GlcNAc...) asparagine). 4 disulfide bridges follow: cysteine 718–cysteine 816, cysteine 829–cysteine 1037, cysteine 911–cysteine 920, and cysteine 922–cysteine 937. N-linked (GlcNAc...) asparagine glycosylation is found at asparagine 913 and asparagine 921. N-linked (GlcNAc...) asparagine glycosylation is found at asparagine 1010 and asparagine 1015. A helical transmembrane segment spans residues 1054 to 1076 (FPGHTLIAVATAVVLGGLIFIAF). Residues 1077-1116 (MFQLQGIHPWRTFQRWIRRNQEKFSSISLSELIHRSKSEE) lie on the Cytoplasmic side of the membrane.

As to quaternary structure, component of the CatSper complex or CatSpermasome composed of the core pore-forming members CATSPER1, CATSPER2, CATSPER3 and CATSPER4 as well as auxiliary members CATSPERB, CATSPERG, CATSPERD, CATSPERE, CATSPERZ, C2CD6/CATSPERT, TMEM249, TMEM262 and EFCAB9. HSPA1 may be an additional auxiliary complex member. The core complex members CATSPER1, CATSPER2, CATSPER3 and CATSPER4 form a heterotetrameric channel. The auxiliary CATSPERB, CATSPERG, CATSPERD and CATSPERE subunits form a pavilion-like structure over the pore which stabilizes the complex through interactions with CATSPER4, CATSPER3, CATSPER1 and CATSPER2 respectively. TMEM262/CATSPERH interacts with CATSPERB, further stabilizing the complex. C2CD6/CATSPERT interacts at least with CATSPERD and is required for targeting the CatSper complex in the flagellar membrane.

The protein resides in the cell projection. Its subcellular location is the cilium. The protein localises to the flagellum membrane. Functionally, auxiliary component of the CatSper complex, a complex involved in sperm cell hyperactivation. Sperm cell hyperactivation is needed for sperm motility which is essential late in the preparation of sperm for fertilization. The polypeptide is Cation channel sperm-associated auxiliary subunit beta (Homo sapiens (Human)).